Consider the following 636-residue polypeptide: Chaperone protein HtpG (636 aa).

Residues 1–344 (MTMSVETQKE…SNDLSLNVSR (344 aa)) form an a; substrate-binding region. The b stretch occupies residues 345–561 (EILQKDPIID…EQDLGMQMRQ (217 aa)). The c stretch occupies residues 562-636 (ILEASGQKVP…LNKLLVELSV (75 aa)).

Belongs to the heat shock protein 90 family. Homodimer.

The protein localises to the cytoplasm. Its function is as follows. Molecular chaperone. Has ATPase activity. The sequence is that of Chaperone protein HtpG from Pseudomonas fluorescens (strain SBW25).